Reading from the N-terminus, the 263-residue chain is uncharacterized protein (263 aa).

31–38 (GPTGSGKT) provides a ligand contact to ATP.

Belongs to the CbbQ/NirQ/NorQ/GpvN family.

This is an uncharacterized protein from Staphylococcus haemolyticus (strain JCSC1435).